The primary structure comprises 470 residues: tRNA modification GTPase MnmE (470 aa).

Residues Lys-27, Glu-90, and Arg-129 each coordinate (6S)-5-formyl-5,6,7,8-tetrahydrofolate. In terms of domain architecture, TrmE-type G spans 231–391 (GVSLVLAGKP…LRDFLNQRFL (161 aa)). GTP-binding positions include 241 to 246 (NVGKSS), 260 to 266 (TPFPGTT), and 285 to 288 (DTAG). Residues Ser-245 and Thr-266 each coordinate Mg(2+). Lys-470 serves as a coordination point for (6S)-5-formyl-5,6,7,8-tetrahydrofolate.

Belongs to the TRAFAC class TrmE-Era-EngA-EngB-Septin-like GTPase superfamily. TrmE GTPase family. As to quaternary structure, homodimer. Heterotetramer of two MnmE and two MnmG subunits. K(+) is required as a cofactor.

It localises to the cytoplasm. Exhibits a very high intrinsic GTPase hydrolysis rate. Involved in the addition of a carboxymethylaminomethyl (cmnm) group at the wobble position (U34) of certain tRNAs, forming tRNA-cmnm(5)s(2)U34. The polypeptide is tRNA modification GTPase MnmE (Syntrophobacter fumaroxidans (strain DSM 10017 / MPOB)).